The following is a 40-amino-acid chain: Metallothionein-1 (40 aa).

The protein belongs to the metallothionein superfamily. Type 5 family.

This protein binds cations of several transition elements. It is thought to be involved in detoxification processes. In Drosophila melanogaster (Fruit fly), this protein is Metallothionein-1 (MtnA).